The chain runs to 235 residues: Peptidase E (235 aa).

Residues Ser122, Asp137, and His159 each act as charge relay system in the active site.

It belongs to the peptidase S51 family.

The protein localises to the cytoplasm. It catalyses the reaction Dipeptidase E catalyzes the hydrolysis of dipeptides Asp-|-Xaa. It does not act on peptides with N-terminal Glu, Asn or Gln, nor does it cleave isoaspartyl peptides.. Its function is as follows. Hydrolyzes dipeptides containing N-terminal aspartate residues. May play a role in allowing the cell to use peptide aspartate to spare carbon otherwise required for the synthesis of the aspartate family of amino acids. The sequence is that of Peptidase E from Shewanella denitrificans (strain OS217 / ATCC BAA-1090 / DSM 15013).